We begin with the raw amino-acid sequence, 460 residues long: Chromosomal replication initiator protein DnaA (460 aa).

Positions 1 to 73 are domain I, interacts with DnaA modulators; sequence MEISIDSLWS…ANVVQSILGH (73 aa). The interval 73–116 is domain II; the sequence is HPVEIYITVAKGEEFEEIGGGGAWELPTTNSIYETPNQNRQPNT. The interval 117–333 is domain III, AAA+ region; the sequence is ELNAKYVFSR…GALTRALAYI (217 aa). ATP-binding residues include Gly-161, Gly-163, Lys-164, and Thr-165. Residues 334 to 460 are domain IV, binds dsDNA; it reads SIWGLPMTVA…MNSRSRKPSL (127 aa).

This sequence belongs to the DnaA family. In terms of assembly, oligomerizes as a right-handed, spiral filament on DNA at oriC.

It is found in the cytoplasm. Plays an essential role in the initiation and regulation of chromosomal replication. ATP-DnaA binds to the origin of replication (oriC) to initiate formation of the DNA replication initiation complex once per cell cycle. Binds the DnaA box (a 9 base pair repeat at the origin) and separates the double-stranded (ds)DNA. Forms a right-handed helical filament on oriC DNA; dsDNA binds to the exterior of the filament while single-stranded (ss)DNA is stabiized in the filament's interior. The ATP-DnaA-oriC complex binds and stabilizes one strand of the AT-rich DNA unwinding element (DUE), permitting loading of DNA polymerase. After initiation quickly degrades to an ADP-DnaA complex that is not apt for DNA replication. Binds acidic phospholipids. This chain is Chromosomal replication initiator protein DnaA, found in Trichormus variabilis (strain ATCC 29413 / PCC 7937) (Anabaena variabilis).